Here is a 222-residue protein sequence, read N- to C-terminus: Cytochrome b6 (222 aa).

Residues 39–59 (IFYCLGGLTLTCFLIQFATGF) traverse the membrane as a helical segment. Y41 contacts heme b. Position 42 (C42) interacts with heme c. 5 residues coordinate heme b: R90, H93, R94, H107, and R110. The next 3 membrane-spanning stretches (helical) occupy residues 97–117 (ASMMVLMMILHVFRVYLTGGF), 123–143 (LTWVVGVMLAVTTVTFGVTGY), and 193–213 (LHTFVLPWAIAVLLLLHFLMI). 2 residues coordinate heme b: H194 and H209. The heme c site is built by R214 and I218. Residue S219 coordinates heme b.

This sequence belongs to the cytochrome b family. PetB subfamily. In terms of assembly, the 4 large subunits of the cytochrome b6-f complex are cytochrome b6, subunit IV (17 kDa polypeptide, PetD), cytochrome f and the Rieske protein, while the 4 small subunits are PetG, PetL, PetM and PetN. The complex functions as a dimer. Heme b is required as a cofactor. Requires heme c as cofactor.

Its subcellular location is the cellular thylakoid membrane. Component of the cytochrome b6-f complex, which mediates electron transfer between photosystem II (PSII) and photosystem I (PSI), cyclic electron flow around PSI, and state transitions. The sequence is that of Cytochrome b6 from Synechocystis sp. (strain ATCC 27184 / PCC 6803 / Kazusa).